The sequence spans 238 residues: HTH-type transcriptional regulator TreR (238 aa).

The HTH gntR-type domain maps to 1 to 71 (MKVNKFITIY…RGKGSVVLNR (71 aa)). Positions 31-50 (EHELTAQYGTSRETVRKALH) form a DNA-binding region, H-T-H motif.

In terms of assembly, dimer of dimers.

Its function is as follows. Repressor for the trePA operon. It is able to bind trehalose-6-phosphate. The polypeptide is HTH-type transcriptional regulator TreR (treR) (Bacillus subtilis (strain 168)).